Here is a 734-residue protein sequence, read N- to C-terminus: Exonuclease 1 (734 aa).

Residues Met-1 to Asn-99 form an N-domain region. Residues Asp-30, Asp-78, Glu-150, Asp-152, Asp-171, Asp-173, and Asp-225 each contribute to the Mg(2+) site. The I-domain stretch occupies residues Arg-138–Ser-229. Disordered stretches follow at residues Glu-599 to Thr-650, Ala-656 to Gly-675, and Gly-685 to Val-716. The span at Pro-604–Asp-620 shows a compositional bias: polar residues. Over residues Ser-621–Ser-641 the composition is skewed to basic and acidic residues. A compositionally biased stretch (polar residues) spans Gly-700–Asn-715.

It belongs to the XPG/RAD2 endonuclease family. EXO1 subfamily. It depends on Mg(2+) as a cofactor.

The protein localises to the nucleus. Functionally, 5'-&gt;3' double-stranded DNA exonuclease which may also contain a cryptic 3'-&gt;5' double-stranded DNA exonuclease activity. Also exhibits endonuclease activity against 5'-overhanging flap structures similar to those generated by displacement synthesis when DNA polymerase encounters the 5'-end of a downstream Okazaki fragment. Required for DNA mismatch repair (MMR). This is Exonuclease 1 (exo1) from Xenopus laevis (African clawed frog).